The primary structure comprises 171 residues: Adenine phosphoribosyltransferase (171 aa).

Belongs to the purine/pyrimidine phosphoribosyltransferase family. Homodimer.

The protein localises to the cytoplasm. The catalysed reaction is AMP + diphosphate = 5-phospho-alpha-D-ribose 1-diphosphate + adenine. The protein operates within purine metabolism; AMP biosynthesis via salvage pathway; AMP from adenine: step 1/1. Its function is as follows. Catalyzes a salvage reaction resulting in the formation of AMP, that is energically less costly than de novo synthesis. The protein is Adenine phosphoribosyltransferase of Natranaerobius thermophilus (strain ATCC BAA-1301 / DSM 18059 / JW/NM-WN-LF).